A 366-amino-acid chain; its full sequence is 3-dehydroquinate synthase (366 aa).

NAD(+)-binding positions include 74 to 79 (SGEAAK), 108 to 112 (GVVGD), 132 to 133 (TT), lysine 144, lysine 153, and 171 to 174 (FLRT). Residues glutamate 186, histidine 249, and histidine 266 each coordinate Zn(2+).

Belongs to the sugar phosphate cyclases superfamily. Dehydroquinate synthase family. Requires Co(2+) as cofactor. Zn(2+) serves as cofactor. It depends on NAD(+) as a cofactor.

Its subcellular location is the cytoplasm. It catalyses the reaction 7-phospho-2-dehydro-3-deoxy-D-arabino-heptonate = 3-dehydroquinate + phosphate. It participates in metabolic intermediate biosynthesis; chorismate biosynthesis; chorismate from D-erythrose 4-phosphate and phosphoenolpyruvate: step 2/7. Functionally, catalyzes the conversion of 3-deoxy-D-arabino-heptulosonate 7-phosphate (DAHP) to dehydroquinate (DHQ). The sequence is that of 3-dehydroquinate synthase from Geobacillus kaustophilus (strain HTA426).